A 57-amino-acid chain; its full sequence is UPF0391 membrane protein HNE_2348 (57 aa).

Transmembrane regions (helical) follow at residues 4–24 and 27–47; these read WALTFFILAIIAALLGFGGIA and AASIAKILFFVFLALLVITFV.

The protein belongs to the UPF0391 family.

It is found in the cell membrane. The chain is UPF0391 membrane protein HNE_2348 from Hyphomonas neptunium (strain ATCC 15444).